The following is a 30-amino-acid chain: Photosystem I reaction center subunit XII (30 aa).

The chain crosses the membrane as a helical span at residues 7–26 (IFVALLFALVSAVLAIRLGK).

It belongs to the PsaM family.

The protein resides in the plastid. Its subcellular location is the chloroplast thylakoid membrane. This Porphyra purpurea (Red seaweed) protein is Photosystem I reaction center subunit XII.